The following is a 243-amino-acid chain: Ubiquinone/menaquinone biosynthesis C-methyltransferase UbiE (243 aa).

Residues threonine 69, aspartate 90, and 116-117 (DA) each bind S-adenosyl-L-methionine.

Belongs to the class I-like SAM-binding methyltransferase superfamily. MenG/UbiE family.

The enzyme catalyses a 2-demethylmenaquinol + S-adenosyl-L-methionine = a menaquinol + S-adenosyl-L-homocysteine + H(+). It carries out the reaction a 2-methoxy-6-(all-trans-polyprenyl)benzene-1,4-diol + S-adenosyl-L-methionine = a 5-methoxy-2-methyl-3-(all-trans-polyprenyl)benzene-1,4-diol + S-adenosyl-L-homocysteine + H(+). The protein operates within quinol/quinone metabolism; menaquinone biosynthesis; menaquinol from 1,4-dihydroxy-2-naphthoate: step 2/2. It participates in cofactor biosynthesis; ubiquinone biosynthesis. In terms of biological role, methyltransferase required for the conversion of demethylmenaquinol (DMKH2) to menaquinol (MKH2) and the conversion of 2-polyprenyl-6-methoxy-1,4-benzoquinol (DDMQH2) to 2-polyprenyl-3-methyl-6-methoxy-1,4-benzoquinol (DMQH2). The chain is Ubiquinone/menaquinone biosynthesis C-methyltransferase UbiE from Burkholderia cenocepacia (strain HI2424).